The sequence spans 291 residues: Probable xyloglucan endotransglucosylase/hydrolase protein 16 (291 aa).

A signal peptide spans 1–24; it reads MGRILNRTVLMTLLVVTMAGTAFS. The region spanning 25-215 is the GH16 domain; the sequence is GSFNEEFDLT…WSKAPFTAYY (191 aa). The Nucleophile role is filled by E101. The Proton donor role is filled by E105. E105 lines the xyloglucan pocket. A glycan (N-linked (GlcNAc...) asparagine) is linked at N109. Residues 118 to 120, 128 to 130, 194 to 195, and G199 each bind xyloglucan; these read HTN, NRE, and DW. 2 disulfide bridges follow: C223-C232 and C272-C286. R277 contacts xyloglucan.

Belongs to the glycosyl hydrolase 16 family. XTH group 2 subfamily. Contains at least one intrachain disulfide bond essential for its enzymatic activity.

It localises to the secreted. Its subcellular location is the cell wall. The protein localises to the extracellular space. The protein resides in the apoplast. The enzyme catalyses breaks a beta-(1-&gt;4) bond in the backbone of a xyloglucan and transfers the xyloglucanyl segment on to O-4 of the non-reducing terminal glucose residue of an acceptor, which can be a xyloglucan or an oligosaccharide of xyloglucan.. Functionally, catalyzes xyloglucan endohydrolysis (XEH) and/or endotransglycosylation (XET). Cleaves and religates xyloglucan polymers, an essential constituent of the primary cell wall, and thereby participates in cell wall construction of growing tissues. The protein is Probable xyloglucan endotransglucosylase/hydrolase protein 16 (XTH16) of Arabidopsis thaliana (Mouse-ear cress).